Here is a 166-residue protein sequence, read N- to C-terminus: 16S rRNA aminocarboxypropyltransferase (166 aa).

The S-adenosyl-L-methionine site is built by Thr-17, Ile-62, Leu-84, Tyr-99, and Ser-103.

It belongs to the TDD superfamily. TSR3 family.

It is found in the cytoplasm. The catalysed reaction is an N(1)-methylpseudouridine in rRNA + S-adenosyl-L-methionine = N(1)-methyl-N(3)-[(3S)-3-amino-3-carboxypropyl]pseudouridine in rRNA + S-methyl-5'-thioadenosine + H(+). Functionally, aminocarboxypropyltransferase that catalyzes the aminocarboxypropyl transfer on pseudouridine corresponding to position 914 in M.jannaschii 16S rRNA. It constitutes the last step in biosynthesis of the hypermodified N1-methyl-N3-(3-amino-3-carboxypropyl) pseudouridine (m1acp3-Psi). The chain is 16S rRNA aminocarboxypropyltransferase from Saccharolobus islandicus (strain Y.N.15.51 / Yellowstone #2) (Sulfolobus islandicus).